A 168-amino-acid polypeptide reads, in one-letter code: Pheromone-binding protein (168 aa).

Positions Met-1–Ser-26 are cleaved as a signal peptide. 3 disulfides stabilise this stretch: Cys-45–Cys-80, Cys-76–Cys-134, and Cys-123–Cys-143.

This sequence belongs to the PBP/GOBP family. In terms of assembly, homodimer. In terms of tissue distribution, antenna.

Its function is as follows. This major soluble protein in olfactory sensilla of male moths might serve to solubilize the extremely hydrophobic pheromone molecules and to transport pheromone through the aqueous lymph to receptors located on olfactory cilia. PBP is also found in sensilla from female M.sexta antennae. In Manduca sexta (Tobacco hawkmoth), this protein is Pheromone-binding protein.